The chain runs to 212 residues: Secreted and transmembrane protein 1b (212 aa).

The N-terminal stretch at 1-28 (MLAYSVTSSGLFPRMLWALLLLAASLNA) is a signal peptide. Over 29 to 160 (HNDVWDEPCC…DKPPTAVRTE (132 aa)) the chain is Extracellular. A disulfide bridge connects residues Cys38 and Cys55. N-linked (GlcNAc...) asparagine glycans are attached at residues Asn56, Asn85, Asn114, and Asn130. Residues 161-181 (VIIIIAIATTIIITGIGVFVW) traverse the membrane as a helical segment. At 182 to 212 (YKQFPVAPQIQMSVPCLIHGSPGIPYLTLPP) the chain is on the cytoplasmic side.

This sequence belongs to the SECTM family. As to quaternary structure, interacts with CD7.

The protein localises to the cell membrane. It is found in the secreted. In terms of biological role, may be involved in thymocyte signaling. In Mus musculus (Mouse), this protein is Secreted and transmembrane protein 1b (Sectm1b).